We begin with the raw amino-acid sequence, 78 residues long: RNA-binding protein Hfq (78 aa).

Residues 10–69 form the Sm domain; that stretch reads DPFLNALRKEHVPVSIYLVNGIKLQGHIESFDQYVVLLRNTVTQMVYKHAISTVVPARAV.

This sequence belongs to the Hfq family. As to quaternary structure, homohexamer.

RNA chaperone that binds small regulatory RNA (sRNAs) and mRNAs to facilitate mRNA translational regulation in response to envelope stress, environmental stress and changes in metabolite concentrations. Also binds with high specificity to tRNAs. This is RNA-binding protein Hfq from Herminiimonas arsenicoxydans.